The chain runs to 74 residues: Conotoxin MiEr93 (74 aa).

A signal peptide spans 1 to 22; the sequence is MKLTCVLIIAVLFLTAYQLATA. A propeptide spanning residues 23 to 45 is cleaved from the precursor; that stretch reads ASYAKGKQKHRALRPADKHLRLT. 3 disulfide bridges follow: C48/C62, C55/C66, and C61/C73.

This sequence belongs to the conotoxin O1 superfamily. In terms of tissue distribution, expressed by the venom duct.

It is found in the secreted. This Conus miles (Soldier cone) protein is Conotoxin MiEr93.